Consider the following 594-residue polypeptide: Transcription factor TFIIIB component B'' (594 aa).

The interval 1 to 169 (MSSIVNKSGT…ARRLSTISNK (169 aa)) is disordered. Serine 49 is subject to Phosphoserine. Residues 150 to 168 (LDSSSNSNGTARRLSTISN) show a composition bias toward polar residues. Serine 178 carries the phosphoserine modification. Disordered stretches follow at residues 217-245 (SPPT…DENE) and 317-343 (ARQE…KEER). Basic and acidic residues-rich tracts occupy residues 225 to 241 (SLDR…SREA) and 317 to 330 (ARQE…LTKE). The region spanning 415-466 (SYTDPWTVEEMIKFYKALSMWGTDFNLISQLYPYRSRKQVKAKFVNEEKKRP) is the SANT domain. Basic and acidic residues predominate over residues 520–529 (KNTAKEEDQT). Disordered stretches follow at residues 520 to 547 (KNTA…GGIM) and 567 to 594 (LKRK…EIDQ). Residues 579-594 (DNEDNEGSEEEPEIDQ) are compositionally biased toward acidic residues.

Belongs to the TFC5 family. As to quaternary structure, TFIIIB comprises the TATA-binding protein (TBP), the B-related factor (BRF) and the B'' component (BDP1). Interacts with TFC4.

The protein localises to the nucleus. Functionally, general activator of RNA polymerase III transcription. This chain is Transcription factor TFIIIB component B'' (BDP1), found in Saccharomyces cerevisiae (strain ATCC 204508 / S288c) (Baker's yeast).